A 396-amino-acid polypeptide reads, in one-letter code: dTDP-epi-vancosaminyltransferase (396 aa).

Residue 10–12 coordinates dTDP-beta-L-4-epi-vancosamine; it reads SRG. 4 residues coordinate devancoaminyl-vancomycin: aspartate 127, glutamine 133, tyrosine 141, and tyrosine 169. DTDP-beta-L-4-epi-vancosamine-binding positions include arginine 207, serine 230, 277–278, and 293–298; these read EV and HDSAGT.

The protein belongs to the glycosyltransferase 28 family.

The enzyme catalyses dTDP-beta-L-4-epi-vancosamine + devancoaminyl-vancomycin = chloroorienticin B + dTDP + H(+). It participates in antibiotic biosynthesis; vancomycin biosynthesis. Functionally, catalyzes the attachment of 4-epi-vancosamine from a TDP donor to the beta-OH-Tyr-6 of the aglycone cosubstrate in the biosynthesis of glycopeptide antibiotic chloroeremomycin, a member of the vancomycin group of antibiotics. Strongly prefers devancoaminyl-vancomycin (DVV) as substrate rather than the heptapeptide vancomycin aglycone (AGV). Acts downstream of GtfB. The polypeptide is dTDP-epi-vancosaminyltransferase (gtfA) (Amycolatopsis orientalis (Nocardia orientalis)).